Reading from the N-terminus, the 148-residue chain is 3-hydroxyacyl-[acyl-carrier-protein] dehydratase FabZ (148 aa).

His48 is a catalytic residue.

The protein belongs to the thioester dehydratase family. FabZ subfamily.

It localises to the cytoplasm. The catalysed reaction is a (3R)-hydroxyacyl-[ACP] = a (2E)-enoyl-[ACP] + H2O. Involved in unsaturated fatty acids biosynthesis. Catalyzes the dehydration of short chain beta-hydroxyacyl-ACPs and long chain saturated and unsaturated beta-hydroxyacyl-ACPs. This chain is 3-hydroxyacyl-[acyl-carrier-protein] dehydratase FabZ, found in Acinetobacter baylyi (strain ATCC 33305 / BD413 / ADP1).